Reading from the N-terminus, the 110-residue chain is Glycine cleavage system H-like protein (110 aa).

One can recognise a Lipoyl-binding domain in the interval 10 to 97 (VEKVGDLYVF…PEENWLFKLD (88 aa)). D27 bears the ADP-ribosyl aspartic acid mark. K56 carries the post-translational modification N6-lipoyllysine.

As to quaternary structure, lipoylated GcvH-L directly interacts with SAV0325, which reverses the SirTM-mediated mono-ADP-ribosylation of GcvH-L, and with the oxidoreductase SAV0322. Post-translationally, is lipoylated on K-56 by LplA2 (SAV0327) and then mono-ADP-ribosylated, probably on D-27, by SirTM (SAV0326). The mono-ADP-ribosylation state of GcvH-L might regulate the availability of the lipoyl moiety for redox reactions; ADP-ribosylation would inhibit the interaction of the oxidoreductase with GcvH-L when it is not required, thus ADP-ribosylation of GcvH-L might be acting to keep the response 'off' under non-stress conditions.

In terms of biological role, may act as a carrier protein for the ROS scavenging lipoyl moiety and/or as a substrate for oxidoreductases such as SAV0322 and SAV0323. This chain is Glycine cleavage system H-like protein, found in Staphylococcus aureus (strain Mu50 / ATCC 700699).